Reading from the N-terminus, the 598-residue chain is uncharacterized protein (598 aa).

Positions 397, 408, 506, and 520 each coordinate Mn(2+).

Belongs to the peptidase M24B family. Requires Mn(2+) as cofactor.

This is an uncharacterized protein from Schizosaccharomyces pombe (strain 972 / ATCC 24843) (Fission yeast).